A 494-amino-acid chain; its full sequence is Anthranilate synthase component 1 (494 aa).

L-tryptophan is bound by residues Ser52 and Pro274–Met276. A chorismate-binding site is contributed by Gly309–Thr310. Glu336 lines the Mg(2+) pocket. Residues Tyr424, Arg444, Gly458 to Gly460, and Gly460 each bind chorismate. Residue Glu473 participates in Mg(2+) binding.

Belongs to the anthranilate synthase component I family. Heterotetramer consisting of two non-identical subunits: a beta subunit (TrpG) and a large alpha subunit (TrpE). The cofactor is Mg(2+).

The enzyme catalyses chorismate + L-glutamine = anthranilate + pyruvate + L-glutamate + H(+). It functions in the pathway amino-acid biosynthesis; L-tryptophan biosynthesis; L-tryptophan from chorismate: step 1/5. Its activity is regulated as follows. Feedback inhibited by tryptophan. Part of a heterotetrameric complex that catalyzes the two-step biosynthesis of anthranilate, an intermediate in the biosynthesis of L-tryptophan. In the first step, the glutamine-binding beta subunit (TrpG) of anthranilate synthase (AS) provides the glutamine amidotransferase activity which generates ammonia as a substrate that, along with chorismate, is used in the second step, catalyzed by the large alpha subunit of AS (TrpE) to produce anthranilate. In the absence of TrpG, TrpE can synthesize anthranilate directly from chorismate and high concentrations of ammonia. This chain is Anthranilate synthase component 1 (trpE), found in Aquifex aeolicus (strain VF5).